The chain runs to 379 residues: Chaperone protein DnaJ (379 aa).

Positions 5-70 (DYYEVLGVSR…QKRAAYDQYG (66 aa)) constitute a J domain. The segment at 134 to 212 (GVTKEIRIPT…CHGHGRVEKS (79 aa)) adopts a CR-type zinc-finger fold. Zn(2+)-binding residues include Cys147, Cys150, Cys164, Cys167, Cys186, Cys189, Cys200, and Cys203. CXXCXGXG motif repeat units follow at residues 147–154 (CDVCHGSG), 164–171 (CPTCHGAG), 186–193 (CPHCHGRG), and 200–207 (CNKCHGHG).

The protein belongs to the DnaJ family. In terms of assembly, homodimer. Zn(2+) serves as cofactor.

The protein resides in the cytoplasm. Participates actively in the response to hyperosmotic and heat shock by preventing the aggregation of stress-denatured proteins and by disaggregating proteins, also in an autonomous, DnaK-independent fashion. Unfolded proteins bind initially to DnaJ; upon interaction with the DnaJ-bound protein, DnaK hydrolyzes its bound ATP, resulting in the formation of a stable complex. GrpE releases ADP from DnaK; ATP binding to DnaK triggers the release of the substrate protein, thus completing the reaction cycle. Several rounds of ATP-dependent interactions between DnaJ, DnaK and GrpE are required for fully efficient folding. Also involved, together with DnaK and GrpE, in the DNA replication of plasmids through activation of initiation proteins. This Yersinia pestis bv. Antiqua (strain Antiqua) protein is Chaperone protein DnaJ.